The chain runs to 168 residues: Gastrula zinc finger protein XlCGF42.1 (168 aa).

C2H2-type zinc fingers lie at residues 6-28, 34-56, 62-84, 90-112, 118-140, and 146-165; these read YSCSDCGKCFTRRWNLSEHRKSH, FCCSVCGKGFSYHSQMKSHYRTH, CICSECGKSFTDHAGLRIHQKYH, FSCSECGKCFTRRSGLTAHLRIH, YTCTECGKCFTCRTDLARHLRIH, and FTCSQCEKSFASHSDLDRHH.

This sequence belongs to the krueppel C2H2-type zinc-finger protein family.

Its subcellular location is the nucleus. May be involved in transcriptional regulation. This is Gastrula zinc finger protein XlCGF42.1 from Xenopus laevis (African clawed frog).